The following is a 502-amino-acid chain: ATP synthase subunit alpha (502 aa).

169 to 176 (GDRQTGKT) is an ATP binding site.

The protein belongs to the ATPase alpha/beta chains family. In terms of assembly, F-type ATPases have 2 components, CF(1) - the catalytic core - and CF(0) - the membrane proton channel. CF(1) has five subunits: alpha(3), beta(3), gamma(1), delta(1), epsilon(1). CF(0) has three main subunits: a(1), b(2) and c(9-12). The alpha and beta chains form an alternating ring which encloses part of the gamma chain. CF(1) is attached to CF(0) by a central stalk formed by the gamma and epsilon chains, while a peripheral stalk is formed by the delta and b chains.

The protein resides in the cell inner membrane. It carries out the reaction ATP + H2O + 4 H(+)(in) = ADP + phosphate + 5 H(+)(out). Functionally, produces ATP from ADP in the presence of a proton gradient across the membrane. The alpha chain is a regulatory subunit. The sequence is that of ATP synthase subunit alpha from Geotalea uraniireducens (strain Rf4) (Geobacter uraniireducens).